The following is a 353-amino-acid chain: L-tryptophan dehydrogenase (353 aa).

Arginine 44 serves as a coordination point for NAD(+). Lysine 80 acts as the Proton donor/acceptor in catalysis. NAD(+) is bound by residues aspartate 114, threonine 146, 176–181 (GLGNVG), lysine 204, and 255–257 (AAN).

Belongs to the Glu/Leu/Phe/Val dehydrogenases family. As to quaternary structure, homodimer.

The catalysed reaction is L-tryptophan + NAD(+) + H2O = indole-3-pyruvate + NH4(+) + NADH + H(+). Highly susceptible to inhibition by indole-3-pyruvate. Activity is not affected by the presence of metal ions, EDTA, KCl or DMSO. Functionally, catalyzes the reversible oxidative deamination of L-tryptophan to indole-3-pyruvate in the presence of NAD(+). Shows weak activity with L-phenylalanine, but cannot use other L-amino acids and D-Trp. Cannot use NADP(+) for oxidative deamination of L-Trp, and shows only weak activity with NADPH for reductive amination of indole-3-pyruvate. Involved in the biosynthesis of scytonemin, a cyanobacterial radiation-absorbing pigment. This chain is L-tryptophan dehydrogenase, found in Nostoc punctiforme.